Here is a 218-residue protein sequence, read N- to C-terminus: N-(5'-phosphoribosyl)anthranilate isomerase (218 aa).

This sequence belongs to the TrpF family.

It catalyses the reaction N-(5-phospho-beta-D-ribosyl)anthranilate = 1-(2-carboxyphenylamino)-1-deoxy-D-ribulose 5-phosphate. It participates in amino-acid biosynthesis; L-tryptophan biosynthesis; L-tryptophan from chorismate: step 3/5. The protein is N-(5'-phosphoribosyl)anthranilate isomerase of Rhodopseudomonas palustris (strain BisB5).